Here is a 166-residue protein sequence, read N- to C-terminus: Large ribosomal subunit protein uL10 (166 aa).

Belongs to the universal ribosomal protein uL10 family. As to quaternary structure, part of the ribosomal stalk of the 50S ribosomal subunit. The N-terminus interacts with L11 and the large rRNA to form the base of the stalk. The C-terminus forms an elongated spine to which L12 dimers bind in a sequential fashion forming a multimeric L10(L12)X complex.

Its function is as follows. Forms part of the ribosomal stalk, playing a central role in the interaction of the ribosome with GTP-bound translation factors. The polypeptide is Large ribosomal subunit protein uL10 (rplJ) (Streptococcus pyogenes serotype M1).